We begin with the raw amino-acid sequence, 168 residues long: RxLR effector protein CRE8 (168 aa).

The N-terminal stretch at 1–23 (MRLPSILVVAASTLFLHYGYTSA) is a signal peptide. The short motif at 54-69 (RFLRDGKIAEGDNEER) is the RxLR-dEER element.

It belongs to the RxLR effector family.

The protein localises to the secreted. It is found in the host cell. In terms of biological role, effector that is involved in host plant infection. Contributes to virulence during the early infection stage, by inhibiting plant defense responses induced by both PAMP-triggered immunity (PTI) and effector-triggered immunity (ETI). This Phytophthora infestans (strain T30-4) (Potato late blight agent) protein is RxLR effector protein CRE8.